The sequence spans 206 residues: Protease (206 aa).

Residues histidine 55, aspartate 72, and cysteine 122 contribute to the active site.

The protein belongs to the peptidase C5 family. Interacts with protease cofactor pVI-C; this interaction is necessary for protease activation.

It is found in the virion. The protein resides in the host nucleus. It carries out the reaction Cleaves proteins of the adenovirus and its host cell at two consensus sites: -Yaa-Xaa-Gly-Gly-|-Xaa- and -Yaa-Xaa-Gly-Xaa-|-Gly- (in which Yaa is Met, Ile or Leu, and Xaa is any amino acid).. Requires DNA and protease cofactor for maximal activation. Inside nascent virions, becomes partially activated by binding to the viral DNA, allowing it to cleave the cofactor that binds to the protease and fully activates it. Actin, like the viral protease cofactor, seems to act as a cofactor in the cleavage of cytokeratin 18 and of actin itself. Its function is as follows. Cleaves viral precursor proteins (pTP, pIIIa, pVI, pVII, pVIII, and pX) inside newly assembled particles giving rise to mature virions. Protease complexed to its cofactor slides along the viral DNA to specifically locate and cleave the viral precursors. Mature virions have a weakened organization compared to the unmature virions, thereby facilitating subsequent uncoating. Without maturation, the particle lacks infectivity and is unable to uncoat. Late in adenovirus infection, in the cytoplasm, may participate in the cytoskeleton destruction. Cleaves host cell cytoskeletal keratins K7 and K18. The chain is Protease from Fowl adenovirus A serotype 1 (strain CELO / Phelps) (FAdV-1).